We begin with the raw amino-acid sequence, 190 residues long: Iron-sulfur protein (190 aa).

Positions 8–36 constitute a 4Fe-4S ferredoxin-type 1 domain; sequence VIIYANPDHCLSCHSCELACAVAHSGGHD. [4Fe-4S] cluster is bound by residues C17, C20, C23, C27, C65, C68, C73, C77, C96, C99, C102, C106, C133, C136, C150, and C154. 4Fe-4S ferredoxin-type domains follow at residues 87-116 and 133-164; these read GQVQIVEQHCIGCKLCVMVCPFGAITVRSE and CDLCVDWRASTGKTAPACVEACPTKAIRMVDL.

Functionally, the carbon monoxide dehydrogenase (CODH) oxidizes carbon monoxide coupled, via CooF, to the reduction of a hydrogen cation by a hydrogenase (probably CooH). CooF is required in stoichiometric amounts in vitro for anchoring CODH to the membrane as well as for conveying the electrons to the hydrogenase. This is Iron-sulfur protein (cooF) from Rhodospirillum rubrum.